A 584-amino-acid polypeptide reads, in one-letter code: MFS-type transporter gkaD (584 aa).

Low complexity predominate over residues 1-11 (MAVDTETTTTT). The tract at residues 1–60 (MAVDTETTTTTIPVTDSDRIDDQNNLTSNAIPHASEKTVPDSPASEQNEVSDESEDKPSK) is disordered. N-linked (GlcNAc...) asparagine glycosylation is present at N25. 8 helical membrane passes run 65 to 85 (FGFYAIIVALALTSLLTSLEA), 99 to 119 (LGGASLYVWVVNGYYLTQTAF), 134 to 154 (WPMICSAAMFTIGSGVAGGSK), 167 to 187 (GIGSGGILVLTEIIICDLLPL), 196 to 216 (MIVSLVGIGAALGPLFGGLIV), 223 to 243 (WVFYLNVPIGGVACLMLFFFL), 262 to 282 (WIGNVLFVMSMVSILIALSWA), and 293 to 313 (VVVPLVLGFVGSAAFVVYEGS). Residue N328 is glycosylated (N-linked (GlcNAc...) asparagine). 6 consecutive transmembrane segments (helical) span residues 334–354 (AFAVTFLHTLSSVSVMYFLPV), 369–389 (VQLLPTILFMIPGAIAGGTLL), 398–418 (LQHGGLAFMIIGFGLLTLLDA), 425–445 (WVGYQLLGALGTGLALPVLLP), 462–482 (TWSFMRTYGFIWGATIATAVF), and 536–556 (LNVVWYVSLAFAGLGFLLVFL).

It belongs to the major facilitator superfamily.

The protein resides in the membrane. MFS-type transporter; part of the gene cluster that mediates the biosynthesis of GKK1032, fungal natural products containing a macrocyclic para-cyclophane connected to a decahydrofluorene ring system that show potent antitumor activities. The chain is MFS-type transporter gkaD from Penicillium citrinum.